Reading from the N-terminus, the 119-residue chain is UPF0102 protein FP2501 (119 aa).

This sequence belongs to the UPF0102 family.

The chain is UPF0102 protein FP2501 from Flavobacterium psychrophilum (strain ATCC 49511 / DSM 21280 / CIP 103535 / JIP02/86).